The primary structure comprises 405 residues: Endo-1,4-beta-xylanase 5 (405 aa).

Residues 1-22 form the signal peptide; the sequence is MTRLATLITLAGLLAVSPGAYA. N27 and N69 each carry an N-linked (GlcNAc...) asparagine glycan. A GH10 domain is found at 32 to 352; that stretch reads STGAEGLNSL…KPAYTSVSSL (321 aa). Catalysis depends on E166, which acts as the Proton donor. N171 carries an N-linked (GlcNAc...) asparagine glycan. Catalysis depends on E273, which acts as the Nucleophile. C302 and C308 are joined by a disulfide. The GPI-anchor amidated glycine moiety is linked to residue G380. Residues 381 to 405 constitute a propeptide, removed in mature form; the sequence is AGRETVSIAGLTLALSSLAFGMFML.

The protein belongs to the glycosyl hydrolase 10 (cellulase F) family.

The protein resides in the cell membrane. It localises to the secreted. It catalyses the reaction Endohydrolysis of (1-&gt;4)-beta-D-xylosidic linkages in xylans.. The protein operates within glycan degradation; xylan degradation. Functionally, endo-1,4-beta-xylanase involved in the hydrolysis of xylan, a major structural heterogeneous polysaccharide found in plant biomass representing the second most abundant polysaccharide in the biosphere, after cellulose. The polypeptide is Endo-1,4-beta-xylanase 5 (XYL5) (Pyricularia grisea (Crabgrass-specific blast fungus)).